The following is a 293-amino-acid chain: Formamidopyrimidine-DNA glycosylase (293 aa).

The active-site Schiff-base intermediate with DNA is the Pro2. Catalysis depends on Glu3, which acts as the Proton donor. The active-site Proton donor; for beta-elimination activity is Lys58. DNA-binding residues include His104, Arg123, and Lys166. The segment at 257 to 293 (AAYDREGERCRTDGCGGAVKRFVQNGRSTFWCSGCQK) adopts an FPG-type zinc-finger fold. The active-site Proton donor; for delta-elimination activity is the Arg283.

This sequence belongs to the FPG family. In terms of assembly, monomer. Zn(2+) serves as cofactor.

The catalysed reaction is Hydrolysis of DNA containing ring-opened 7-methylguanine residues, releasing 2,6-diamino-4-hydroxy-5-(N-methyl)formamidopyrimidine.. It catalyses the reaction 2'-deoxyribonucleotide-(2'-deoxyribose 5'-phosphate)-2'-deoxyribonucleotide-DNA = a 3'-end 2'-deoxyribonucleotide-(2,3-dehydro-2,3-deoxyribose 5'-phosphate)-DNA + a 5'-end 5'-phospho-2'-deoxyribonucleoside-DNA + H(+). Involved in base excision repair of DNA damaged by oxidation or by mutagenic agents. Acts as a DNA glycosylase that recognizes and removes damaged bases. Has a preference for oxidized purines, such as 7,8-dihydro-8-oxoguanine (8-oxoG). Has AP (apurinic/apyrimidinic) lyase activity and introduces nicks in the DNA strand. Cleaves the DNA backbone by beta-delta elimination to generate a single-strand break at the site of the removed base with both 3'- and 5'-phosphates. The polypeptide is Formamidopyrimidine-DNA glycosylase (Rhodopseudomonas palustris (strain BisB5)).